Reading from the N-terminus, the 444-residue chain is Aflatoxin biosynthesis regulatory protein (444 aa).

Positions 1–26 (MVDHISPRASPGPIRSSQTRRARKLR) are disordered. The segment at residues 29 to 56 (CTSCASSKVRCTKEKPACARCIERGLAC) is a DNA-binding region (zn(2)-C6 fungal-type). The segment at 64 to 167 (MGRNPRAPSP…QGLGGDLAGQ (104 aa)) is disordered. Residues 106 to 116 (TQAHTHAHSHP) are compositionally biased toward basic residues. Residues 120–130 (PQSHPQSNQPP) show a composition bias toward low complexity. A compositionally biased stretch (polar residues) spans 136-149 (PNGSSSVSAIFSHQ).

In terms of assembly, interacts with its co-regulator aflS.

The protein resides in the nucleus. The protein localises to the endosome. Its function is as follows. Transcription factor involved in regulation of the aflatoxin biosynthesis gene cluster. Binds with its co-regulator aflS to AFLR1 elements (5'-TCGSWNNSCGR-3') present in the promoters of the aflatoxin cluster genes. The ratio of the expression data between aflS:aflR plays a crucial role in the regulation of aflatoxins production. A high ratio, produced at a range between 17 and 30 degrees Celsius, corresponds with the production profile of aflatoxin G1 biosynthesis. A low ratio, produced over 30 degrees Celsius, is related to aflatoxin B1 biosynthesis. This chain is Aflatoxin biosynthesis regulatory protein, found in Aspergillus parasiticus (strain ATCC 56775 / NRRL 5862 / SRRC 143 / SU-1).